The sequence spans 375 residues: MICPVIELAQQLIKRPSLSPSDAGCQEIMIQRLAAIGFTIEPMNFGDTLNFWAWRGEGETLAFAGHTDVVPTGDESHWHSPPFEPTIRDGMLYGRGAADMKGSLAAMIVAAERFVAAHPDHKGRLAFMITSDEEAKATNGTVKVVEALMARHERLDYCLVGEPSSTDRVGDIVKNGRRGSITANLRIHGVQGHVAYPHLADNPVHRAMPALNELVATQWDEGNAFFPATSMQIANLQAGTGSNNVIPGEFYVQFNFRFSTELTDSLIKQRVAALLDRHQLDYTLEWVLSGQPFLTAKGALVDAVVNAVKHYTEITPQLLTTGGTSDGRFIALMGAQVVELGPVNATIHKVNECVSAADLQLLSRMYQKIMEQLIA.

Position 66 (His66) interacts with Zn(2+). The active site involves Asp68. Asp99 contacts Zn(2+). Catalysis depends on Glu133, which acts as the Proton acceptor. Residues Glu134, Glu162, and His348 each coordinate Zn(2+).

The protein belongs to the peptidase M20A family. DapE subfamily. Homodimer. Requires Zn(2+) as cofactor. The cofactor is Co(2+).

It catalyses the reaction N-succinyl-(2S,6S)-2,6-diaminopimelate + H2O = (2S,6S)-2,6-diaminopimelate + succinate. The protein operates within amino-acid biosynthesis; L-lysine biosynthesis via DAP pathway; LL-2,6-diaminopimelate from (S)-tetrahydrodipicolinate (succinylase route): step 3/3. Functionally, catalyzes the hydrolysis of N-succinyl-L,L-diaminopimelic acid (SDAP), forming succinate and LL-2,6-diaminopimelate (DAP), an intermediate involved in the bacterial biosynthesis of lysine and meso-diaminopimelic acid, an essential component of bacterial cell walls. This is Succinyl-diaminopimelate desuccinylase from Yersinia pestis bv. Antiqua (strain Antiqua).